Consider the following 154-residue polypeptide: Basic phospholipase A2 PC20 (154 aa).

The signal sequence occupies residues 1 to 21; it reads MYPAHLLVLLAVCVSLLGASA. A propeptide spanning residues 22–27 is cleaved from the precursor; the sequence is ISPRPL. Intrachain disulfides connect cysteine 38–cysteine 98, cysteine 54–cysteine 143, cysteine 56–cysteine 72, cysteine 71–cysteine 125, cysteine 78–cysteine 118, cysteine 87–cysteine 111, and cysteine 105–cysteine 116. The Ca(2+) site is built by tyrosine 55, serine 57, and glycine 59. Residue histidine 75 is part of the active site. Residue aspartate 76 participates in Ca(2+) binding. Aspartate 119 is an active-site residue.

This sequence belongs to the phospholipase A2 family. Group I subfamily. D49 sub-subfamily. The cofactor is Ca(2+). As to expression, expressed by the venom gland.

It localises to the secreted. It carries out the reaction a 1,2-diacyl-sn-glycero-3-phosphocholine + H2O = a 1-acyl-sn-glycero-3-phosphocholine + a fatty acid + H(+). Functionally, snake venom phospholipase A2 (PLA2) that inhibits neuromuscular transmission by blocking acetylcholine release from the nerve termini. PLA2 catalyzes the calcium-dependent hydrolysis of the 2-acyl groups in 3-sn-phosphoglycerides. The sequence is that of Basic phospholipase A2 PC20 from Laticauda colubrina (Yellow-lipped sea krait).